A 446-amino-acid chain; its full sequence is Probable glycine dehydrogenase (decarboxylating) subunit 1 (446 aa).

The protein belongs to the GcvP family. N-terminal subunit subfamily. In terms of assembly, the glycine cleavage system is composed of four proteins: P, T, L and H. In this organism, the P 'protein' is a heterodimer of two subunits.

It carries out the reaction N(6)-[(R)-lipoyl]-L-lysyl-[glycine-cleavage complex H protein] + glycine + H(+) = N(6)-[(R)-S(8)-aminomethyldihydrolipoyl]-L-lysyl-[glycine-cleavage complex H protein] + CO2. Functionally, the glycine cleavage system catalyzes the degradation of glycine. The P protein binds the alpha-amino group of glycine through its pyridoxal phosphate cofactor; CO(2) is released and the remaining methylamine moiety is then transferred to the lipoamide cofactor of the H protein. The chain is Probable glycine dehydrogenase (decarboxylating) subunit 1 from Coxiella burnetii (strain CbuK_Q154) (Coxiella burnetii (strain Q154)).